Here is a 267-residue protein sequence, read N- to C-terminus: Alpha-tubulin N-acetyltransferase (267 aa).

Residues 1–197 (MDFRAGLENV…NNFVVYSEFF (197 aa)) form the N-acetyltransferase domain. Residues 131 to 144 (FYIHESHQRKGYGK) and 167 to 176 (SMKMIQFLHK) each bind acetyl-CoA.

The protein belongs to the acetyltransferase ATAT1 family.

The catalysed reaction is L-lysyl-[alpha-tubulin] + acetyl-CoA = N(6)-acetyl-L-lysyl-[alpha-tubulin] + CoA + H(+). Functionally, specifically acetylates 'Lys-40' in alpha-tubulin on the lumenal side of microtubules. Promotes microtubule destabilization and accelerates microtubule dynamics; this activity may be independent of acetylation activity. Acetylates alpha-tubulin with a slow enzymatic rate, due to a catalytic site that is not optimized for acetyl transfer. Enters the microtubule through each end and diffuses quickly throughout the lumen of microtubules. Acetylates only long/old microtubules because of its slow acetylation rate since it does not have time to act on dynamically unstable microtubules before the enzyme is released. The polypeptide is Alpha-tubulin N-acetyltransferase (Schistosoma japonicum (Blood fluke)).